Consider the following 208-residue polypeptide: 3-demethoxyubiquinol 3-hydroxylase (208 aa).

Fe cation contacts are provided by E57, E87, H90, E139, E171, and H174.

This sequence belongs to the COQ7 family. Requires Fe cation as cofactor.

It localises to the cell membrane. It catalyses the reaction a 5-methoxy-2-methyl-3-(all-trans-polyprenyl)benzene-1,4-diol + AH2 + O2 = a 3-demethylubiquinol + A + H2O. It participates in cofactor biosynthesis; ubiquinone biosynthesis. Functionally, catalyzes the hydroxylation of 2-nonaprenyl-3-methyl-6-methoxy-1,4-benzoquinol during ubiquinone biosynthesis. This is 3-demethoxyubiquinol 3-hydroxylase from Verminephrobacter eiseniae (strain EF01-2).